We begin with the raw amino-acid sequence, 295 residues long: Glycine N-acyltransferase-like protein Keg1 (295 aa).

Lys-41 carries the N6-acetyllysine; alternate modification. Lys-41 carries the N6-succinyllysine; alternate modification. Lys-43 carries the N6-acetyllysine modification. Lys-48 is modified (N6-acetyllysine; alternate). Lys-48 bears the N6-succinyllysine; alternate mark. An N6-acetyllysine mark is found at Lys-80 and Lys-83. N6-acetyllysine; alternate occurs at positions 124, 128, and 140. N6-succinyllysine; alternate occurs at positions 124, 128, and 140. The residue at position 150 (Lys-150) is an N6-acetyllysine. Lys-255 bears the N6-acetyllysine; alternate mark. Lys-255 is subject to N6-succinyllysine; alternate.

The protein belongs to the glycine N-acyltransferase family. In terms of assembly, binds to microtubules.

Its subcellular location is the cytoplasm. The protein localises to the cytoskeleton. It localises to the microtubule organizing center. It is found in the centrosome. The enzyme catalyses an acyl-CoA + glycine = an N-acylglycine + CoA + H(+). Functionally, acyltransferase which transfers the acyl group to the N-terminus of glycine. Can conjugate a multitude of substrates to form a variety of N-acylglycines. The polypeptide is Glycine N-acyltransferase-like protein Keg1 (Keg1) (Mus musculus (Mouse)).